The chain runs to 138 residues: Large ribosomal subunit protein eL14A (138 aa).

Position 2 is an N-acetylserine (S2).

Belongs to the eukaryotic ribosomal protein eL14 family. As to quaternary structure, component of the large ribosomal subunit (LSU). Mature yeast ribosomes consist of a small (40S) and a large (60S) subunit. The 40S small subunit contains 1 molecule of ribosomal RNA (18S rRNA) and 33 different proteins (encoded by 57 genes). The large 60S subunit contains 3 rRNA molecules (25S, 5.8S and 5S rRNA) and 46 different proteins (encoded by 81 genes). N-terminally acetylated by acetyltransferase NatA.

It is found in the cytoplasm. In terms of biological role, component of the ribosome, a large ribonucleoprotein complex responsible for the synthesis of proteins in the cell. The small ribosomal subunit (SSU) binds messenger RNAs (mRNAs) and translates the encoded message by selecting cognate aminoacyl-transfer RNA (tRNA) molecules. The large subunit (LSU) contains the ribosomal catalytic site termed the peptidyl transferase center (PTC), which catalyzes the formation of peptide bonds, thereby polymerizing the amino acids delivered by tRNAs into a polypeptide chain. The nascent polypeptides leave the ribosome through a tunnel in the LSU and interact with protein factors that function in enzymatic processing, targeting, and the membrane insertion of nascent chains at the exit of the ribosomal tunnel. The protein is Large ribosomal subunit protein eL14A of Saccharomyces cerevisiae (strain ATCC 204508 / S288c) (Baker's yeast).